The primary structure comprises 661 residues: Pentatricopeptide repeat-containing protein At3g04750, mitochondrial (661 aa).

The transit peptide at 1-18 directs the protein to the mitochondrion; that stretch reads MCFVLLLRRGFRLFGTEC. PPR repeat units lie at residues 99–131, 132–163, 165–195, 196–230, 231–265, 268–298, 299–333, 334–366, 367–401, 402–432, 433–467, 468–498, and 504–539; these read NVFV…RVSP, DRQT…GCLS, GNYL…MPHP, DVSS…GIEP, DEYT…GPVY, NLIL…MKKK, DMRS…DLVS, WNSL…KVKP, DRVT…QLKG, DAFL…ATEK, DVAL…GVTP, NNVT…MKDK, and ETEH…PSQS. The tract at residues 540 to 615 is type E motif; the sequence is MWGSILSACR…TAGYSSVVGV (76 aa). Residues 616–647 form a type E(+) motif region; that stretch reads EGLHRFVAAEKQNHPRWTEIKRILQHLYNEMK.

The protein belongs to the PPR family. PCMP-E subfamily.

Its subcellular location is the mitochondrion. The protein is Pentatricopeptide repeat-containing protein At3g04750, mitochondrial (PCMP-E81) of Arabidopsis thaliana (Mouse-ear cress).